A 949-amino-acid chain; its full sequence is General transcription factor II-I repeat domain-containing protein 2B (949 aa).

GTF2I-like repeat units lie at residues 98 to 192 and 323 to 417; these read QVHS…QLGG and LSSI…SNVG.

This sequence belongs to the TFII-I family. As to expression, ubiquitous.

The protein localises to the nucleus. The protein is General transcription factor II-I repeat domain-containing protein 2B (GTF2IRD2B) of Homo sapiens (Human).